The sequence spans 261 residues: Carbonic anhydrase 1 (261 aa).

A2 carries the post-translational modification N-acetylalanine. One can recognise an Alpha-carbonic anhydrase domain in the interval 4 to 261 (SDWGYDSPNG…LKGRTVRAFF (258 aa)). H65 functions as the Proton donor/acceptor in the catalytic mechanism. Residues H95, H97, and H120 each coordinate Zn(2+). Residues T200 and 200–201 (TH) each bind substrate.

It belongs to the alpha-carbonic anhydrase family. The cofactor is Zn(2+).

Its subcellular location is the cytoplasm. It catalyses the reaction hydrogencarbonate + H(+) = CO2 + H2O. The catalysed reaction is urea = cyanamide + H2O. With respect to regulation, inhibited by acetazolamide. Catalyzes the reversible hydration of carbon dioxide. Can hydrate cyanamide to urea. This Equus caballus (Horse) protein is Carbonic anhydrase 1 (CA1).